A 756-amino-acid chain; its full sequence is Xylosyl- and glucuronyltransferase LARGE1 (756 aa).

At 1–10 the chain is on the cytoplasmic side; that stretch reads MLGICRGRRK. The helical; Signal-anchor for type II membrane protein transmembrane segment at 11–31 threads the bilayer; sequence FLAASLTLLCIPAITWIYLFA. The Lumenal portion of the chain corresponds to 32–756; the sequence is GSFEDGKPVS…LKYLTAENNS (725 aa). 2 disordered regions span residues 43 to 64 and 82 to 108; these read SPLE…ERES and QLSL…EEGT. Positions 44–58 are enriched in polar residues; the sequence is PLESQAHSPRYTASS. The stretch at 53 to 95 forms a coiled coil; it reads RYTASSQRERESLEVRVREVEEENRALRRQLSLAQGQSPAHHR. 3 N-linked (GlcNAc...) asparagine glycosylation sites follow: N97, N122, and N148. The xylosyltransferase activity stretch occupies residues 138-413; that stretch reads IHVAIVCAGY…FLEYDGNLLR (276 aa). Positions 242 and 244 each coordinate Mn(2+). Residue N272 is glycosylated (N-linked (GlcNAc...) asparagine). Positions 414–756 are glucuronyltransferase activity; sequence RELFGCPSET…LKYLTAENNS (343 aa). The Mn(2+) site is built by D563 and D565.

The protein in the C-terminal section; belongs to the glycosyltransferase 49 family. It in the N-terminal section; belongs to the glycosyltransferase 8 family. In terms of assembly, interacts with DAG1 (via the N-terminal domain of alpha-DAG1); the interaction increases binding of DAG1 to laminin. Interacts with B4GAT1. Requires Mn(2+) as cofactor. As to expression, ubiquitous. Highest expression in heart, diaphragm and brain, where it is especially found in cerebral cortex, hippocampus, and trigeminal ganglion.

The protein localises to the golgi apparatus membrane. The enzyme catalyses 3-O-[beta-D-GlcA-(1-&gt;3)-beta-D-Xyl-(1-&gt;4)-Rib-ol-P-Rib-ol-P-3-beta-D-GalNAc-(1-&gt;3)-beta-D-GlcNAc-(1-&gt;4)-(O-6-P-alpha-D-Man)]-Thr-[protein] + UDP-alpha-D-xylose = 3-O-[alpha-D-Xyl-(1-&gt;3)-beta-D-GlcA-(1-&gt;4)-beta-D-Xyl-(1-&gt;4)-Rib-ol-P-Rib-ol-P-3-beta-D-GalNAc-(1-&gt;3)-beta-D-GlcNAc-(1-&gt;4)-(O-6-P-alpha-D-Man)]-Thr-[protein] + UDP + H(+). It catalyses the reaction 3-O-{(1-&gt;[3)-alpha-D-Xyl-(1-&gt;3)-beta-D-GlcA-(1-&gt;](n)-4)-beta-D-Xyl-(1-&gt;4)-Rib-ol-P-Rib-ol-P-3-beta-D-GalNAc-(1-&gt;3)-beta-D-GlcNAc-(1-&gt;4)-O-6-P-alpha-D-Man}-L-Thr-[protein] + UDP-alpha-D-glucuronate = 3-O-{beta-D-GlcA-(1-&gt;[3)-alpha-D-Xyl-(1-&gt;3)-beta-D-GlcA-(1-&gt;](n)-4)-beta-D-Xyl-(1-&gt;4)-Rib-ol-P-Rib-ol-P-3-beta-D-GalNAc-(1-&gt;3)-beta-D-GlcNAc-(1-&gt;4)-O-6-P-alpha-D-Man}-L-Thr-[protein] + UDP + H(+). The catalysed reaction is 3-O-{beta-D-GlcA-(1-&gt;[3)-alpha-D-Xyl-(1-&gt;3)-beta-D-GlcA-(1-&gt;](n)-4)-beta-D-Xyl-(1-&gt;4)-Rib-ol-P-Rib-ol-P-3-beta-D-GalNAc-(1-&gt;3)-beta-D-GlcNAc-(1-&gt;4)-O-6-P-alpha-D-Man}-L-Thr-[protein] + UDP-alpha-D-xylose = 3-O-{(1-&gt;[3)-alpha-D-Xyl-(1-&gt;3)-beta-D-GlcA-(1-&gt;](n+1)-4)-beta-D-Xyl-(1-&gt;4)-Rib-ol-P-Rib-ol-P-3-beta-D-GalNAc-(1-&gt;3)-beta-D-GlcNAc-(1-&gt;4)-O-6-P-alpha-D-Man}-L-Thr-[protein] + UDP + H(+). It participates in protein modification; protein glycosylation. In terms of biological role, bifunctional glycosyltransferase with both alpha-1,3-xylosyltransferase and beta-1,3-glucuronyltransferase activities involved in the maturation of alpha-dystroglycan (DAG1) by glycosylation leading to DAG1 binding to laminin G-like domain-containing extracellular proteins with high affinity. Elongates the glucuronyl-beta-1,4-xylose-beta disaccharide primer structure initiated by B4GAT1 by adding repeating units [-3-Xylose-alpha-1,3-GlcA-beta-1-] to produce a heteropolysaccharide. Requires the phosphorylation of core M3 (O-mannosyl trisaccharide) by POMK to elongate the glucuronyl-beta-1,4-xylose-beta disaccharide primer. Plays a key role in skeletal muscle function and regeneration. The sequence is that of Xylosyl- and glucuronyltransferase LARGE1 from Mus musculus (Mouse).